Here is a 320-residue protein sequence, read N- to C-terminus: Aspartate carbamoyltransferase catalytic subunit (320 aa).

The carbamoyl phosphate site is built by Arg-70 and Thr-71. Lys-98 contributes to the L-aspartate binding site. Residues Arg-120, His-149, and Gln-152 each coordinate carbamoyl phosphate. L-aspartate is bound by residues Arg-182 and Arg-237. Carbamoyl phosphate contacts are provided by Gly-278 and Pro-279.

Belongs to the aspartate/ornithine carbamoyltransferase superfamily. ATCase family. As to quaternary structure, heterododecamer (2C3:3R2) of six catalytic PyrB chains organized as two trimers (C3), and six regulatory PyrI chains organized as three dimers (R2).

The enzyme catalyses carbamoyl phosphate + L-aspartate = N-carbamoyl-L-aspartate + phosphate + H(+). The protein operates within pyrimidine metabolism; UMP biosynthesis via de novo pathway; (S)-dihydroorotate from bicarbonate: step 2/3. Its function is as follows. Catalyzes the condensation of carbamoyl phosphate and aspartate to form carbamoyl aspartate and inorganic phosphate, the committed step in the de novo pyrimidine nucleotide biosynthesis pathway. This chain is Aspartate carbamoyltransferase catalytic subunit, found in Ruthia magnifica subsp. Calyptogena magnifica.